The primary structure comprises 81 residues: uncharacterized protein (81 aa).

This sequence to yeast YDL157C.

It localises to the mitochondrion. This is an uncharacterized protein from Schizosaccharomyces pombe (strain 972 / ATCC 24843) (Fission yeast).